The following is a 324-amino-acid chain: Methenyltetrahydromethanopterin cyclohydrolase (324 aa).

The protein belongs to the MCH family.

It is found in the cytoplasm. It catalyses the reaction 5,10-methenyl-5,6,7,8-tetrahydromethanopterin + H2O = N(5)-formyl-5,6,7,8-tetrahydromethanopterin + H(+). It functions in the pathway one-carbon metabolism; formaldehyde degradation; formate from formaldehyde (H(4)MPT route): step 3/5. In terms of biological role, catalyzes the hydrolysis of methenyl-H(4)MPT(+) to 5-formyl-H(4)MPT. The protein is Methenyltetrahydromethanopterin cyclohydrolase of Methylobacterium sp. (strain 4-46).